We begin with the raw amino-acid sequence, 605 residues long: MARMRVRFPTLVLLLGILFLMAVSIGIAYGEKDVIKNHERPGEREHEERDPRQQPRPRKQEEQEREHRREEEHDRDPSRGRRESEERQEEERERRREPCREREQEQQPQHGRREEEEEEEEWQPRRLRPQSRKEEREQEQGSSSSSRKQSGYERRQYHERREQRDEKEKEQDSRSDSRRQRNPYHFSSERFQTRYRNRNGQIRVLERFDQRTNRLENLQNYRIVEFQSNPNTLILPKHSDADYILVVLNGRATITIVNPDKRQAYNLEYGDALRVPAGTTSYILNPDDNQNLRVVKLAIPINNPSNFYDFYPSSTKDQQSYFSGFSKNTLEATFNTRYEEIQRILLGNEDEQEDEEQRRGQEQSYQDEGVIVRVSKEQIQELRKHAQSSSRKGKPSESGPFNLRSNESIYSNKFGNFYEITPERNPQVQDLDISLTFTEINEGALLLPHYNSKAIFIVVVDEGEGNYELVGIRDQQRQQDEQEEEEEEVRRYSARLSEGDIFVIPAGYPISVNASSNLRLLGFGINANENQRNFLAGSEDNVISQLDREVKELTFPGSAQDVERLIKNQQQSYFANAQPQQKQQREKEGRRGRRSLISSILSTLY.

The signal sequence occupies residues 1-30; it reads MARMRVRFPTLVLLLGILFLMAVSIGIAYG. Residues 37–105 show a composition bias toward basic and acidic residues; sequence NHERPGEREH…REPCREREQE (69 aa). Disordered regions lie at residues 37–193, 346–367, and 382–405; these read NHER…RFQT, LGNE…SYQD, and LRKH…NLRS. Low complexity predominate over residues 140–149; the sequence is QGSSSSSRKQ. Residues 150 to 179 are compositionally biased toward basic and acidic residues; sequence SGYERRQYHERREQRDEKEKEQDSRSDSRR. The Cupin type-1 1 domain maps to 184 to 342; the sequence is YHFSSERFQT…TFNTRYEEIQ (159 aa). Residues 401-563 enclose the Cupin type-1 2 domain; that stretch reads FNLRSNESIY…TFPGSAQDVE (163 aa). N-linked (GlcNAc...) asparagine glycosylation is found at asparagine 406 and asparagine 513. The segment at 574–593 is disordered; that stretch reads FANAQPQQKQQREKEGRRGR.

This sequence belongs to the 7S seed storage protein family. As to quaternary structure, component of globulins complexes which accumulate in seeds.

In terms of biological role, seed storage protein. Accumulates during seed development and is hydrolyzed after germination to provide a carbon and nitrogen source for the developing seedling. This chain is Conglutin beta 7, found in Lupinus angustifolius (Narrow-leaved blue lupine).